The sequence spans 617 residues: Mitochondrial Rho GTPase 2 (617 aa).

The Cytoplasmic segment spans residues M1–S590. A Miro 1 domain is found at K2 to H168. Positions 16, 17, 18, and 19 each coordinate GTP. T18 contributes to the Mg(2+) binding site. D57 contributes to the Mg(2+) binding site. The GTP site is built by S59, N118, K119, D121, A149, and K150. EF-hand domains lie at Q184–N219 and L304–M339. 8 residues coordinate Ca(2+): D197, D199, D201, E208, D317, D319, D321, and E328. Residues R416–Y578 form the Miro 2 domain. 4 residues coordinate GTP: G428, G430, K431, and T432. Mg(2+)-binding residues include T432 and E474. The GTP site is built by K528 and D530. Residues F591–F613 traverse the membrane as a helical; Anchor for type IV membrane protein segment. Over S614 to K617 the chain is Mitochondrial intermembrane.

The protein belongs to the mitochondrial Rho GTPase family. In terms of assembly, homodimer.

The protein localises to the mitochondrion outer membrane. The catalysed reaction is GTP + H2O = GDP + phosphate + H(+). It catalyses the reaction ATP + H2O = ADP + phosphate + H(+). It carries out the reaction UTP + H2O = UDP + phosphate + H(+). Functionally, atypical mitochondrial nucleoside-triphosphatase (NTPase) involved in mitochondrial trafficking. Probably involved in control of anterograde transport of mitochondria and their subcellular distribution. Can hydrolyze GTP, ATP and UTP. The protein is Mitochondrial Rho GTPase 2 (rhot2) of Danio rerio (Zebrafish).